The sequence spans 873 residues: Leucine--tRNA ligase (873 aa).

Residues 41-51 (PYPSGRIHMGH) carry the 'HIGH' region motif. The 'KMSKS' region motif lies at 645–649 (KMSKS). Residue Lys648 coordinates ATP.

The protein belongs to the class-I aminoacyl-tRNA synthetase family.

The protein resides in the cytoplasm. The enzyme catalyses tRNA(Leu) + L-leucine + ATP = L-leucyl-tRNA(Leu) + AMP + diphosphate. The sequence is that of Leucine--tRNA ligase from Cereibacter sphaeroides (strain ATCC 17025 / ATH 2.4.3) (Rhodobacter sphaeroides).